Consider the following 124-residue polypeptide: Probable glycine cleavage system H protein (124 aa).

A Lipoyl-binding domain is found at 23 to 104 (VATVGITDYA…PYKNWLVKIR (82 aa)). N6-lipoyllysine is present on Lys-64.

Belongs to the GcvH family. As to quaternary structure, the glycine cleavage system is composed of four proteins: P, T, L and H. It depends on (R)-lipoate as a cofactor.

In terms of biological role, the glycine cleavage system catalyzes the degradation of glycine. The H protein shuttles the methylamine group of glycine from the P protein to the T protein. This chain is Probable glycine cleavage system H protein, found in Picrophilus torridus (strain ATCC 700027 / DSM 9790 / JCM 10055 / NBRC 100828 / KAW 2/3).